The primary structure comprises 598 residues: uncharacterized protein (598 aa).

In terms of domain architecture, ABC transmembrane type-1 spans 39–322 (LIMVFVFVTV…LSNQFNMIQM (284 aa)). 5 helical membrane passes run 40 to 60 (IMVF…PYLI), 80 to 100 (MLIL…QGKI), 150 to 170 (VLGN…GAVI), 177 to 197 (VILS…TQIV), and 273 to 293 (LGFA…IITV). In terms of domain architecture, ABC transporter spans 355 to 589 (IEFKNVWFSY…RGFYYELFTS (235 aa)). 388-395 (GPTGSGKT) serves as a coordination point for ATP.

The protein belongs to the ABC transporter superfamily.

Its subcellular location is the cell membrane. This is an uncharacterized protein from Thermotoga maritima (strain ATCC 43589 / DSM 3109 / JCM 10099 / NBRC 100826 / MSB8).